Reading from the N-terminus, the 435-residue chain is Hyaluronidase-1 (435 aa).

The N-terminal stretch at 1–21 (MAAHLLPICTLFLNLLSVAQG) is a signal peptide. Disulfide bonds link Cys-43/Cys-333 and Cys-207/Cys-221. Residues Asn-70, Asn-99, Asn-107, and Asn-121 are each glycosylated (N-linked (GlcNAc...) asparagine). The active-site Proton donor is the Glu-131. N-linked (GlcNAc...) asparagine glycosylation is found at Asn-216, Asn-256, and Asn-350. Cystine bridges form between Cys-358–Cys-369, Cys-363–Cys-418, and Cys-420–Cys-429. Positions 418–429 (CRCYPGWRGTWC) constitute an EGF-like domain.

Belongs to the glycosyl hydrolase 56 family. As to expression, highly expressed in spleen, kidney, and lung.

It localises to the secreted. Its subcellular location is the lysosome. It carries out the reaction Random hydrolysis of (1-&gt;4)-linkages between N-acetyl-beta-D-glucosamine and D-glucuronate residues in hyaluronate.. Its function is as follows. May have a role in promoting tumor progression. May block the TGFB1-enhanced cell growth. This is Hyaluronidase-1 (HYAL1) from Sus scrofa (Pig).